The chain runs to 312 residues: Putative S-adenosyl-L-methionine-dependent methyltransferase Mkms_0097 (312 aa).

Residues D134 and 163–164 each bind S-adenosyl-L-methionine; that span reads DL.

It belongs to the UPF0677 family.

Exhibits S-adenosyl-L-methionine-dependent methyltransferase activity. The chain is Putative S-adenosyl-L-methionine-dependent methyltransferase Mkms_0097 from Mycobacterium sp. (strain KMS).